A 204-amino-acid chain; its full sequence is Small ribosomal subunit protein uS4 (204 aa).

The region spanning 93-156 (SRLSSVLYHS…AKIPILIEAE (64 aa)) is the S4 RNA-binding domain.

Belongs to the universal ribosomal protein uS4 family. In terms of assembly, part of the 30S ribosomal subunit. Contacts protein S5. The interaction surface between S4 and S5 is involved in control of translational fidelity.

In terms of biological role, one of the primary rRNA binding proteins, it binds directly to 16S rRNA where it nucleates assembly of the body of the 30S subunit. Functionally, with S5 and S12 plays an important role in translational accuracy. The chain is Small ribosomal subunit protein uS4 from Wolbachia pipientis subsp. Culex pipiens (strain wPip).